Reading from the N-terminus, the 657-residue chain is Histidine ammonia-lyase (657 aa).

The segment at residues 253–255 (ASG) is a cross-link (5-imidazolinone (Ala-Gly)). Ser254 bears the 2,3-didehydroalanine (Ser) mark. Thr396 bears the Phosphothreonine mark. Ser635 carries the post-translational modification Phosphoserine. Residue Thr637 is modified to Phosphothreonine. At Ser648 the chain carries Phosphoserine.

Belongs to the PAL/histidase family. In terms of processing, contains an active site 4-methylidene-imidazol-5-one (MIO), which is formed autocatalytically by cyclization and dehydration of residues Ala-Ser-Gly. As to expression, liver and skin.

It carries out the reaction L-histidine = trans-urocanate + NH4(+). Its pathway is amino-acid degradation; L-histidine degradation into L-glutamate; N-formimidoyl-L-glutamate from L-histidine: step 1/3. The protein is Histidine ammonia-lyase (Hal) of Rattus norvegicus (Rat).